A 221-amino-acid chain; its full sequence is ATP synthase subunit a 1 (221 aa).

The next 5 membrane-spanning stretches (helical) occupy residues 20–40 (LTIV…ALIT), 78–98 (YLPF…CTVI), 108–128 (LSTT…FGIA), 174–194 (MILV…MNIL), and 196–216 (LLTG…YIAA).

This sequence belongs to the ATPase A chain family. In terms of assembly, F-type ATPases have 2 components, CF(1) - the catalytic core - and CF(0) - the membrane proton channel. CF(1) has five subunits: alpha(3), beta(3), gamma(1), delta(1), epsilon(1). CF(0) has four main subunits: a, b, b' and c.

The protein resides in the cell inner membrane. Functionally, key component of the proton channel; it plays a direct role in the translocation of protons across the membrane. The chain is ATP synthase subunit a 1 from Chlorobaculum tepidum (strain ATCC 49652 / DSM 12025 / NBRC 103806 / TLS) (Chlorobium tepidum).